A 1036-amino-acid polypeptide reads, in one-letter code: Zinc finger protein 532 (1036 aa).

4 disordered regions span residues 26 to 92 (PKAA…LHNG), 106 to 206 (GAKS…EAES), 220 to 265 (RKAE…PSSK), and 281 to 362 (AASD…KVRI). Residues 32 to 52 (SGHDDHESHIKQNAHVDDDSH) show a composition bias toward basic and acidic residues. A phosphoserine mark is found at Ser-130, Ser-133, and Ser-134. Residues 136-151 (EEFEDDEKIEVDDPPD) show a composition bias toward acidic residues. N6-acetyllysine is present on Lys-175. Positions 182 to 193 (ENSSKTGVSTSG) are enriched in polar residues. 2 stretches are compositionally biased toward basic and acidic residues: residues 194–205 (HTDKNKVKREAE) and 220–249 (RKAEDKLKENSEKMLESRVLDGKPSSEKSD). A compositionally biased stretch (low complexity) spans 253 to 265 (AAAASSKTKPSSK). A compositionally biased stretch (basic and acidic residues) spans 302 to 314 (EVNDSPKAADKSP). Phosphoserine occurs at positions 306 and 313. Residues 336 to 353 (SVSSENSSKGSPSSPVGS) show a composition bias toward low complexity. Ser-433 is modified (phosphoserine). Glycyl lysine isopeptide (Lys-Gly) (interchain with G-Cter in SUMO2) cross-links involve residues Lys-458 and Lys-515. The C2H2-type 1; degenerate zinc finger occupies 615–634 (YKCLECGDAFALEKSLSQHY). The C2H2-type 2; degenerate zinc finger occupies 751–775 (LKCLECNEVFQDEPSLATHFQHAAD). The segment at 784-807 (HPCRQCDKSFSSSHSLCRHNRIKH) adopts a C2H2-type 3 zinc-finger fold. Residues 814-840 (YACSHCPDSRRTFTKRLMLERHIQLMH) form a C2H2-type 4; degenerate zinc finger. A disordered region spans residues 847–877 (VKELSDDAGDVTNDEEEEAEIKEDAKVPSPK). The segment covering 852–867 (DDAGDVTNDEEEEAEI) has biased composition (acidic residues). Over residues 868-877 (KEDAKVPSPK) the composition is skewed to basic and acidic residues. Residue Ser-875 is modified to Phosphoserine. Glycyl lysine isopeptide (Lys-Gly) (interchain with G-Cter in SUMO2) cross-links involve residues Lys-879 and Lys-902. 2 consecutive C2H2-type zinc fingers follow at residues 938 to 961 (HQCRECGLCYTSHGSLARHLFIVH) and 999 to 1021 (RKCKVCAKTFETEAALNTHMRTH). Positions 966 to 1000 (PQPVSKQNGAGEDSQQENKPSPEDEAAEGAASDRK) are disordered.

The protein belongs to the krueppel C2H2-type zinc-finger protein family.

It is found in the nucleus. Functionally, may be involved in transcriptional regulation. The sequence is that of Zinc finger protein 532 (Znf532) from Mus musculus (Mouse).